The sequence spans 31 residues: Scolopendra 4610.56 Da toxin (31 aa).

Belongs to the scolopendra toxin 1 family. In terms of processing, contains one or more disulfide bonds. In terms of tissue distribution, expressed by the venom gland.

It localises to the secreted. The protein is Scolopendra 4610.56 Da toxin of Scolopendra viridicornis nigra (Brazilian giant centipede).